We begin with the raw amino-acid sequence, 818 residues long: Hillarin (818 aa).

One can recognise an LIM zinc-binding domain in the interval 9–76; it reads STCLRCSETV…SSHVPKSGPG (68 aa). The tract at residues 97–141 is disordered; that stretch reads FVNEQIRGTRSEVDGGPLGGSRQSTPNGYGSREISSPSQNDSDYK. Polar residues predominate over residues 117-137; that stretch reads SRQSTPNGYGSREISSPSQND. A coiled-coil region spans residues 216–272; that stretch reads QDEWERELQRLTHKFEKELATSRRSRDEANILTMRHEQQKEDLEKNMTLRRSKKKES.

Belongs to the transglutaminase-like superfamily. As to quaternary structure, interacts with pnut. As to expression, localizes to the neuropil of the embryonic central nervous system (at protein level). Also detected in third instar larval brain (at protein level).

The protein resides in the cytoplasm. Its subcellular location is the cell cortex. It localises to the cleavage furrow. In terms of biological role, may act as a modulator of septin function during cytokinesis in the developing nervous system. The sequence is that of Hillarin from Drosophila melanogaster (Fruit fly).